The sequence spans 338 residues: Large ribosomal subunit protein uL10 (338 aa).

The disordered stretch occupies residues 297–338 (PSAQQTQTQQSTAEEKKEEKKEEEKKGPSEEEIGSGLASLFG). A compositionally biased stretch (low complexity) spans 298–308 (SAQQTQTQQST). The span at 309–325 (AEEKKEEKKEEEKKGPS) shows a compositional bias: basic and acidic residues.

It belongs to the universal ribosomal protein uL10 family. In terms of assembly, part of the 50S ribosomal subunit. Forms part of the ribosomal stalk which helps the ribosome interact with GTP-bound translation factors. Forms a heptameric L10(L12)2(L12)2(L12)2 complex, where L10 forms an elongated spine to which the L12 dimers bind in a sequential fashion.

Its function is as follows. Forms part of the ribosomal stalk, playing a central role in the interaction of the ribosome with GTP-bound translation factors. The protein is Large ribosomal subunit protein uL10 of Saccharolobus islandicus (strain M.14.25 / Kamchatka #1) (Sulfolobus islandicus).